A 757-amino-acid polypeptide reads, in one-letter code: POU domain, class 2, transcription factor 1 (757 aa).

Disordered stretches follow at residues 1-43, 271-295, 375-398, and 532-574; these read MKLH…QTNG, AATP…SLEE, SLSN…RRKK, and VSSV…TSPL. 2 stretches are compositionally biased toward polar residues: residues 19 to 43 and 275 to 285; these read RMNN…QTNG and VQQLPQSQTTP. The 75-residue stretch at 294-368 folds into the POU-specific domain; that stretch reads EEPSDLEELE…LLEKWLNDAE (75 aa). Residues 395–454 constitute a DNA-binding region (homeobox); that stretch reads RRKKRTSIETNIRVALEKSFLENQKPTSEEITMIADQLNMEKEVIRVWFCNRRQKEKRIN.

The protein belongs to the POU transcription factor family. Class-2 subfamily.

It is found in the cytoplasm. The protein localises to the nucleus. Functionally, transcription factor that binds to the octamer motif (5'-ATTTGCAT-3') and activates the promoters of the genes for some small nuclear RNAs (snRNA) and histone H2B. Acts downstream of Notch signaling during radial glia formation. Regulates apoptosis, possibly via an FGF-signaling pathway. The polypeptide is POU domain, class 2, transcription factor 1 (Xenopus tropicalis (Western clawed frog)).